The following is a 215-amino-acid chain: Superoxide dismutase [Mn] (215 aa).

The Mn(2+) site is built by His-27, His-83, Asp-170, and His-174.

This sequence belongs to the iron/manganese superoxide dismutase family. As to quaternary structure, homodimer. Mn(2+) is required as a cofactor.

It catalyses the reaction 2 superoxide + 2 H(+) = H2O2 + O2. Functionally, destroys superoxide anion radicals which are normally produced within the cells and which are toxic to biological systems. In Haemophilus influenzae (strain ATCC 51907 / DSM 11121 / KW20 / Rd), this protein is Superoxide dismutase [Mn] (sodA).